The chain runs to 227 residues: ATP synthase F(0) complex subunit a (227 aa).

A run of 6 helical transmembrane segments spans residues 14 to 34 (LFGI…FPAP), 69 to 89 (WGPY…LGLL), 98 to 118 (QLSV…IIGL), 132 to 152 (EGTP…SLFI), 180 to 200 (FVLL…LFLL), and 202 to 222 (LLEV…LSLY).

It belongs to the ATPase A chain family. Component of the ATP synthase complex composed at least of ATP5F1A/subunit alpha, ATP5F1B/subunit beta, ATP5MC1/subunit c (homooctomer), MT-ATP6/subunit a, MT-ATP8/subunit 8, ATP5ME/subunit e, ATP5MF/subunit f, ATP5MG/subunit g, ATP5MK/subunit k, ATP5MJ/subunit j, ATP5F1C/subunit gamma, ATP5F1D/subunit delta, ATP5F1E/subunit epsilon, ATP5PF/subunit F6, ATP5PB/subunit b, ATP5PD/subunit d, ATP5PO/subunit OSCP. ATP synthase complex consists of a soluble F(1) head domain (subunits alpha(3) and beta(3)) - the catalytic core - and a membrane F(0) domain - the membrane proton channel (subunits c, a, 8, e, f, g, k and j). These two domains are linked by a central stalk (subunits gamma, delta, and epsilon) rotating inside the F1 region and a stationary peripheral stalk (subunits F6, b, d, and OSCP). Interacts with DNAJC30; interaction is direct.

The protein localises to the mitochondrion inner membrane. The enzyme catalyses H(+)(in) = H(+)(out). Subunit a, of the mitochondrial membrane ATP synthase complex (F(1)F(0) ATP synthase or Complex V) that produces ATP from ADP in the presence of a proton gradient across the membrane which is generated by electron transport complexes of the respiratory chain. ATP synthase complex consist of a soluble F(1) head domain - the catalytic core - and a membrane F(1) domain - the membrane proton channel. These two domains are linked by a central stalk rotating inside the F(1) region and a stationary peripheral stalk. During catalysis, ATP synthesis in the catalytic domain of F(1) is coupled via a rotary mechanism of the central stalk subunits to proton translocation. With the subunit c (ATP5MC1), forms the proton-conducting channel in the F(0) domain, that contains two crucial half-channels (inlet and outlet) that facilitate proton movement from the mitochondrial intermembrane space (IMS) into the matrix. Protons are taken up via the inlet half-channel and released through the outlet half-channel, following a Grotthuss mechanism. The chain is ATP synthase F(0) complex subunit a from Tetraodon nigroviridis (Spotted green pufferfish).